A 519-amino-acid chain; its full sequence is Histidine--tRNA ligase (519 aa).

It belongs to the class-II aminoacyl-tRNA synthetase family. Homodimer.

It localises to the cytoplasm. It catalyses the reaction tRNA(His) + L-histidine + ATP = L-histidyl-tRNA(His) + AMP + diphosphate + H(+). This Rhodopseudomonas palustris (strain BisB18) protein is Histidine--tRNA ligase.